The chain runs to 618 residues: UvrABC system protein C (618 aa).

A GIY-YIG domain is found at 20 to 98; it reads TAPGVYRMYA…IKSLSPRYNV (79 aa). The UVR domain occupies 207 to 242; sequence DQLGEEIMHSMQQASEALEFERAARLRDLLSSLRSM.

This sequence belongs to the UvrC family. In terms of assembly, interacts with UvrB in an incision complex.

It is found in the cytoplasm. The UvrABC repair system catalyzes the recognition and processing of DNA lesions. UvrC both incises the 5' and 3' sides of the lesion. The N-terminal half is responsible for the 3' incision and the C-terminal half is responsible for the 5' incision. In Xanthomonas campestris pv. campestris (strain 8004), this protein is UvrABC system protein C.